The chain runs to 259 residues: uncharacterized protein (259 aa).

A signal peptide spans 1–28 (MNIKRRLKYLTSCLLVSAFFWINSSAWA). The next 2 membrane-spanning stretches (helical) occupy residues 32-52 (EIPP…IYVA) and 191-211 (WGFL…GIFT).

The protein resides in the cell membrane. This is an uncharacterized protein from Coxiella burnetii (strain RSA 493 / Nine Mile phase I).